We begin with the raw amino-acid sequence, 539 residues long: CTP synthase (539 aa).

Positions 1-272 (MTLRSKMTKY…AQIILSHFKI (272 aa)) are amidoligase domain. Residue S19 coordinates CTP. S19 contacts UTP. 20 to 25 (GLGKGV) contributes to the ATP binding site. Y60 is a binding site for L-glutamine. Position 77 (D77) interacts with ATP. Mg(2+)-binding residues include D77 and E147. CTP-binding positions include 154–156 (DIE), 193–198 (KSKPTQ), and K229. Residues 193 to 198 (KSKPTQ) and K229 each bind UTP. Residues 298–539 (KILMVGKYVE…SFLRVLIKNN (242 aa)) enclose the Glutamine amidotransferase type-1 domain. G360 provides a ligand contact to L-glutamine. Catalysis depends on C387, which acts as the Nucleophile; for glutamine hydrolysis. L-glutamine-binding positions include 388-391 (LGFQ), E410, and R469. Catalysis depends on residues H514 and E516.

Belongs to the CTP synthase family. In terms of assembly, homotetramer.

The enzyme catalyses UTP + L-glutamine + ATP + H2O = CTP + L-glutamate + ADP + phosphate + 2 H(+). The catalysed reaction is L-glutamine + H2O = L-glutamate + NH4(+). It carries out the reaction UTP + NH4(+) + ATP = CTP + ADP + phosphate + 2 H(+). Its pathway is pyrimidine metabolism; CTP biosynthesis via de novo pathway; CTP from UDP: step 2/2. Allosterically activated by GTP, when glutamine is the substrate; GTP has no effect on the reaction when ammonia is the substrate. The allosteric effector GTP functions by stabilizing the protein conformation that binds the tetrahedral intermediate(s) formed during glutamine hydrolysis. Inhibited by the product CTP, via allosteric rather than competitive inhibition. Functionally, catalyzes the ATP-dependent amination of UTP to CTP with either L-glutamine or ammonia as the source of nitrogen. Regulates intracellular CTP levels through interactions with the four ribonucleotide triphosphates. The chain is CTP synthase from Mycoplasmopsis pulmonis (strain UAB CTIP) (Mycoplasma pulmonis).